Here is a 447-residue protein sequence, read N- to C-terminus: Protein O-GlcNAcase (447 aa).

Residues 1 to 277 (MLTGVIEGFY…TTGAYLADPD (277 aa)) enclose the GH84 domain. G8, K39, and D115 together coordinate a protein. D116 functions as the Proton donor in the catalytic mechanism. A protein-binding positions include Y160, 219–221 (WDN), D226, and N254.

This sequence belongs to the glycosyl hydrolase 84 family.

The enzyme catalyses 3-O-(N-acetyl-beta-D-glucosaminyl)-L-seryl-[protein] + H2O = N-acetyl-D-glucosamine + L-seryl-[protein]. The catalysed reaction is 3-O-(N-acetyl-beta-D-glucosaminyl)-L-threonyl-[protein] + H2O = L-threonyl-[protein] + N-acetyl-D-glucosamine. With respect to regulation, inhibited by PUGNac (O-(2-acetamido-2-deoxy-D-glucopyranosylidene)amino-N-phenylcarbamate). Cleaves GlcNAc from O-glycosylated proteins. Can use p-nitrophenyl-beta-GlcNAc and 4-methylumbelliferone-GlcNAc as substrate (in vitro). In Oceanicola granulosus (strain ATCC BAA-861 / DSM 15982 / KCTC 12143 / HTCC2516), this protein is Protein O-GlcNAcase.